The following is a 166-amino-acid chain: Small ribosomal subunit protein uS5 (166 aa).

Residues leucine 11–valine 74 enclose the S5 DRBM domain.

Belongs to the universal ribosomal protein uS5 family. As to quaternary structure, part of the 30S ribosomal subunit. Contacts proteins S4 and S8.

In terms of biological role, with S4 and S12 plays an important role in translational accuracy. Functionally, located at the back of the 30S subunit body where it stabilizes the conformation of the head with respect to the body. The polypeptide is Small ribosomal subunit protein uS5 (Francisella tularensis subsp. tularensis (strain FSC 198)).